A 330-amino-acid polypeptide reads, in one-letter code: Aspartate--ammonia ligase (330 aa).

Belongs to the class-II aminoacyl-tRNA synthetase family. AsnA subfamily.

It is found in the cytoplasm. It carries out the reaction L-aspartate + NH4(+) + ATP = L-asparagine + AMP + diphosphate + H(+). It functions in the pathway amino-acid biosynthesis; L-asparagine biosynthesis; L-asparagine from L-aspartate (ammonia route): step 1/1. The protein is Aspartate--ammonia ligase of Streptococcus agalactiae serotype III (strain NEM316).